A 505-amino-acid polypeptide reads, in one-letter code: L-carnitine/gamma-butyrobetaine antiporter (505 aa).

12 helical membrane-spanning segments follow: residues 10 to 30 (IEPKVFFPPLIIVGILCWLTV), 51 to 71 (WGWAFEWYMVVMLFGWFWLVF), 92 to 112 (IFMMFASCTSAAVLFWGSIEI), 143 to 163 (GPLPWATYSFLSVAFAYFFFV), 195 to 215 (FYLVALIFAMGTSLGLATPLV), 231 to 251 (LDAIIITCWIILNAICVACGL), 263 to 283 (SYLSFLMLGWVFIVSGASFIM), 316 to 336 (WTVFYWAWWVIYAIQMSIFLA), 347 to 367 (LCFGMVMGLTASTWILWTVLG), 403 to 423 (LSTATMWGFFILCFIATVTLI), 446 to 466 (LLVRIGWSVLVGIIGIVLLAL), and 475 to 495 (AIIAGGCPLFFVNIMVTLSFI).

Belongs to the BCCT transporter (TC 2.A.15) family. CaiT subfamily. Homotrimer.

It is found in the cell inner membrane. It carries out the reaction 4-(trimethylamino)butanoate(in) + (R)-carnitine(out) = 4-(trimethylamino)butanoate(out) + (R)-carnitine(in). It participates in amine and polyamine metabolism; carnitine metabolism. Catalyzes the exchange of L-carnitine for gamma-butyrobetaine. This Salmonella agona (strain SL483) protein is L-carnitine/gamma-butyrobetaine antiporter.